A 145-amino-acid polypeptide reads, in one-letter code: uncharacterized protein (145 aa).

2 helical membrane-spanning segments follow: residues 20 to 40 (LIGP…GMFF) and 116 to 136 (MIML…VLSA).

Its subcellular location is the membrane. This is an uncharacterized protein from Saccharomyces cerevisiae (strain ATCC 204508 / S288c) (Baker's yeast).